We begin with the raw amino-acid sequence, 713 residues long: Polyribonucleotide nucleotidyltransferase (713 aa).

Positions 493 and 499 each coordinate Mg(2+). A KH domain is found at 560-619 (PRMITIKINPEKIRDVIGKGGSVIRALTEETGTTIDISDDGVVTIASTNSEGMAEAKKRI). An S1 motif domain is found at 629 to 697 (GHVYEGTVLK…EKGRVRLSAK (69 aa)).

This sequence belongs to the polyribonucleotide nucleotidyltransferase family. The cofactor is Mg(2+).

It localises to the cytoplasm. It catalyses the reaction RNA(n+1) + phosphate = RNA(n) + a ribonucleoside 5'-diphosphate. Its function is as follows. Involved in mRNA degradation. Catalyzes the phosphorolysis of single-stranded polyribonucleotides processively in the 3'- to 5'-direction. The sequence is that of Polyribonucleotide nucleotidyltransferase from Burkholderia mallei (strain NCTC 10247).